Reading from the N-terminus, the 20-residue chain is Punein (20 aa).

The Barwin domain maps to 1-20 (YHYYNPEENHFCATWDASKP).

The N-terminus is blocked.

The sequence is that of Punein from Punica granatum (Pomegranate).